The primary structure comprises 1060 residues: Histone lysine demethylase PHF8 (1060 aa).

The PHD-type zinc finger occupies 41-92; sequence PVYCLCRLPYDVTRFMIECDMCQDWFHGSCVGVEEEKAADIDLYHCPNCEVL. Ser69 carries the phosphoserine; by CDK1 modification. A disordered region spans residues 100–120; sequence KRRGSSKGHDTHKGKPVKTGS. The linker stretch occupies residues 101 to 115; the sequence is RRGSSKGHDTHKGKP. A Phosphoserine; by CDK1 modification is found at Ser120. Residues 231 to 387 form the JmjC domain; that stretch reads FSDTRLSNLV…MQLKAYEIEK (157 aa). Thr280 is a substrate binding site. Residues His283 and Asp285 each coordinate Fe cation. Lys300 contributes to the substrate binding site. His355 provides a ligand contact to Fe cation. Over residues 508–517 the composition is skewed to polar residues; the sequence is AHSTSVSMSR. Residues 508–534 form a disordered region; that stretch reads AHSTSVSMSRLSLPSKNGSKKKGLKPK. Ser651 is modified (phosphoserine). Phosphotyrosine is present on Tyr704. 2 positions are modified to phosphothreonine: Thr705 and Thr706. Residue Ser722 is modified to Phosphoserine. Disordered stretches follow at residues 768–840, 852–902, and 915–1046; these read QSSS…EQDS, YPSL…GTRV, and KLAQ…KQRL. Low complexity-rich tracts occupy residues 769 to 778 and 785 to 804; these read SSSSSPATSS and GGQD…VSNS. Phosphoserine is present on residues Ser804, Ser826, Ser834, Ser854, Ser857, and Ser880. The segment covering 826–839 has biased composition (acidic residues); sequence SEEEEENASLDEQD. The span at 891–900 shows a compositional bias: basic and acidic residues; sequence KQDRPVREGT. Basic residues predominate over residues 924–934; that stretch reads AQKKKYIKKKP. The segment covering 1018–1030 has biased composition (polar residues); that stretch reads RRPSVGSQSNQAG.

The protein belongs to the JHDM1 histone demethylase family. JHDM1D subfamily. As to quaternary structure, interacts with POLR1B, UBTF, SETD1A, HCFC1, E2F1 and ZNF711. Interacts with ZNF263; recruited to the SIX3 promoter along with other proteins involved in chromatin modification and transcriptional corepression where it contributes to transcriptional repression. The cofactor is Fe(2+). Phosphorylation at Ser-69 and Ser-120 are required for dissociation from chromatin and accumulation of H4K20Me1 levels during prophase.

The protein resides in the nucleus. It localises to the nucleolus. It catalyses the reaction N(6),N(6)-dimethyl-L-lysyl(36)-[histone H3] + 2 2-oxoglutarate + 2 O2 = L-lysyl(36)-[histone H3] + 2 formaldehyde + 2 succinate + 2 CO2. It carries out the reaction N(6),N(6)-dimethyl-L-lysyl(9)-[histone H3] + 2 2-oxoglutarate + 2 O2 = L-lysyl(9)-[histone H3] + 2 formaldehyde + 2 succinate + 2 CO2. In terms of biological role, histone lysine demethylase with selectivity for the di- and monomethyl states that plays a key role cell cycle progression, rDNA transcription and brain development. Demethylates mono- and dimethylated histone H3 'Lys-9' residue (H3K9Me1 and H3K9Me2), dimethylated H3 'Lys-27' (H3K27Me2) and monomethylated histone H4 'Lys-20' residue (H4K20Me1). Acts as a transcription activator as H3K9Me1, H3K9Me2, H3K27Me2 and H4K20Me1 are epigenetic repressive marks. Involved in cell cycle progression by being required to control G1-S transition. Acts as a coactivator of rDNA transcription, by activating polymerase I (pol I) mediated transcription of rRNA genes. Required for brain development, probably by regulating expression of neuron-specific genes. Only has activity toward H4K20Me1 when nucleosome is used as a substrate and when not histone octamer is used as substrate. May also have weak activity toward dimethylated H3 'Lys-36' (H3K36Me2), however, the relevance of this result remains unsure in vivo. Specifically binds trimethylated 'Lys-4' of histone H3 (H3K4me3), affecting histone demethylase specificity: has weak activity toward H3K9Me2 in absence of H3K4me3, while it has high activity toward H3K9me2 when binding H3K4me3. Positively modulates transcription of histone demethylase KDM5C, acting synergistically with transcription factor ARX; synergy may be related to enrichment of histone H3K4me3 in regulatory elements. This is Histone lysine demethylase PHF8 (PHF8) from Homo sapiens (Human).